A 181-amino-acid polypeptide reads, in one-letter code: Bifunctional protein PyrR (181 aa).

The short motif at 101–113 (VILVDDVLFTGRT) is the PRPP-binding element.

The protein belongs to the purine/pyrimidine phosphoribosyltransferase family. PyrR subfamily.

The catalysed reaction is UMP + diphosphate = 5-phospho-alpha-D-ribose 1-diphosphate + uracil. Functionally, regulates the transcription of the pyrimidine nucleotide (pyr) operon in response to exogenous pyrimidines. Also displays a weak uracil phosphoribosyltransferase activity which is not physiologically significant. The sequence is that of Bifunctional protein PyrR from Desulfosudis oleivorans (strain DSM 6200 / JCM 39069 / Hxd3) (Desulfococcus oleovorans).